A 335-amino-acid chain; its full sequence is Cytochrome c biogenesis protein CcsA (335 aa).

The next 8 helical transmembrane spans lie at 15–35 (FLLL…PNVT), 36–56 (WLPT…ATLL), 68–88 (LSNL…IHLV), 97–117 (LVGV…ALSL), 142–162 (VMML…AFLV), 243–263 (IIGL…VWAN), 278–298 (WALI…TKGW), and 304–324 (AILA…VNLL).

This sequence belongs to the CcmF/CycK/Ccl1/NrfE/CcsA family. May interact with ccs1.

The protein localises to the cellular thylakoid membrane. Required during biogenesis of c-type cytochromes (cytochrome c6 and cytochrome f) at the step of heme attachment. In Crocosphaera subtropica (strain ATCC 51142 / BH68) (Cyanothece sp. (strain ATCC 51142)), this protein is Cytochrome c biogenesis protein CcsA.